Consider the following 54-residue polypeptide: UPF0391 membrane protein msr3702 (54 aa).

A run of 2 helical transmembrane segments spans residues 4 to 24 (WALV…GGIA) and 30 to 50 (IAQI…LAGL).

Belongs to the UPF0391 family.

The protein localises to the cell membrane. This is UPF0391 membrane protein msr3702 from Mesorhizobium japonicum (strain LMG 29417 / CECT 9101 / MAFF 303099) (Mesorhizobium loti (strain MAFF 303099)).